The primary structure comprises 846 residues: MLFTVSCSKMSSIVDRDDSSIFDGLVEEDDKDKAKRVSRNKSEKKRRDQFNVLIKELGSMLPGNARKMDKSTVLQKSIDFLRKHKEITAQSDASEIRQDWKPTFLSNEEFTQLMLEALDGFFLAIMTDGSIIYVSESVTSLLEHLPSDLVDQSIFNFIPEGEHSEVYKILSTHLLESDSLTPEYLKSKNQLEFCCHMLRGTIDPKEPSTYEYVKFIGNFKSLNSVSSSAHNGFEGTIQRTHRPSYEDRVCFVATVRLATPQFIKEMCTVEEPNEEFTSRHSLEWKFLFLDHRAPPIIGYLPFEVLGTSGYDYYHVDDLENLAKCHEHLMQYGKGKSCYYRFLTKGQQWIWLQTHYYITYHQWNSRPEFIVCTHTVVSYAEVRAERRRELGIEESLPETAADKSQDSGSDNRINTVSLKEALERFDHSPTPSASSRSSRKSSHTAVSDPSSTPTKIPTDTSTPPRQHLPAHEKMVQRRSSFSSQSINSQSVGSSLTQPVMSQATNLPIPQGMSQFQFSAQLGAMQHLKDQLEQRTRMIEANIHRQQEELRKIQEQLQMVHGQGLQMFLQQSNPGLNFGSVQLSSGNSSNIQQLAPINMQGQVVPTNQIQSGMNTGHIGTTQHMIQQQTLQSTSTQSQQNVLSGHSQQTSLPSQTQSTLTAPLYNTMVISQPAAGSMVQIPSSMPQNSTQSAAVTTFTQDRQIRFSQGQQLVTKLVTAPVACGAVMVPSTMLMGQVVTAYPTFATQQQQSQTLSVTQQQQQQSSQEQQLTSVQQPSQAQLTQPPQQFLQTSRLLHGNPSTQLILSAAFPLQQSTFPQSHHQQHQSQQQQQLSRHRTDSLPDPSKVQPQ.

The short motif at 32 to 47 (DKAKRVSRNKSEKKRR) is the Nuclear localization signal element. The region spanning 34–84 (AKRVSRNKSEKKRRDQFNVLIKELGSMLPGNARKMDKSTVLQKSIDFLRKH) is the bHLH domain. A phosphoserine mark is found at Ser-38 and Ser-42. Residue Lys-67 forms a Glycyl lysine isopeptide (Lys-Gly) (interchain with G-Cter in SUMO1) linkage. 2 PAS domains span residues 107–177 (NEEF…LLES) and 262–332 (FIKE…MQYG). The PAC domain maps to 336–379 (SCYYRFLTKGQQWIWLQTHYYITYHQWNSRPEFIVCTHTVVSYA). Residues 371 to 845 (CTHTVVSYAE…SLPDPSKVQP (475 aa)) are interaction with NR3C1. Disordered stretches follow at residues 392–411 (EESL…SDNR) and 420–495 (ALER…SSLT). Ser-408 bears the Phosphoserine mark. Ser-427 bears the Phosphoserine; by GSK3-beta mark. Residue Ser-431 is modified to Phosphoserine. Positions 447-463 (DPSSTPTKIPTDTSTPP) are enriched in polar residues. Residues 450-570 (STPTKIPTDT…QGLQMFLQQS (121 aa)) form an interaction with SIRT1 region. A phosphothreonine; by CDK5 mark is found at Thr-451 and Thr-461. A compositionally biased stretch (low complexity) spans 478-493 (SSFSSQSINSQSVGSS). The segment at 514–564 (FQFSAQLGAMQHLKDQLEQRTRMIEANIHRQQEELRKIQEQLQMVHGQGLQ) is implicated in the circadian rhythmicity. 2 stretches are compositionally biased toward low complexity: residues 624 to 637 (QQQT…QSQQ) and 644 to 654 (SQQTSLPSQTQ). Disordered stretches follow at residues 624–654 (QQQT…SQTQ), 764–783 (EQQL…QPPQ), and 811–846 (STFP…VQPQ). The segment covering 811 to 829 (STFPQSHHQQHQSQQQQQL) has biased composition (low complexity). Lys-842 is covalently cross-linked (Glycyl lysine isopeptide (Lys-Gly) (interchain with G-Cter in SUMO1)).

In terms of assembly, component of the circadian clock oscillator which includes the CRY proteins, CLOCK or NPAS2, BMAL1 or BMAL2, CSNK1D and/or CSNK1E, TIMELESS and the PER proteins. Interacts with KMT2A; in a circadian manner. Forms a heterodimer with BMAL1. The CLOCK-BMAL1 heterodimer is required for E-box-dependent transactivation, for CLOCK nuclear translocation and degradation, and for phosphorylation of both CLOCK and BMAL1. Interacts with NR3C1 in a ligand-dependent fashion. Interacts with ESR1 and estrogen stimulates this interaction. Interacts with the complex p35/CDK5. Interacts with RELA/p65. Interacts with KAT2B, CREBBP, EP300. Interacts with ID1 and ID3. Interacts with ID2. Interacts with MTA1. Interacts with OGA. Interacts with SIRT1. Interacts with CIPC. Interacts with EZH2. Interacts with EIF4E, PIWIL1 and DDX4. Interacts with PER2 and CRY1 and the interaction with PER and CRY proteins requires translocation to the nucleus. Interacts with PER1 and CRY2. Interaction of the CLOCK-BMAL1 heterodimer with PER or CRY inhibits transcription activation. Interaction of the CLOCK-BMAL1 with CRY1 is independent of DNA but with PER2 is off DNA. The CLOCK-BMAL1 heterodimer interacts with GSK3B. Interacts with KDM5A. Interacts with MYBBP1A. Interacts with THRAP3. Interacts with MED1; this interaction requires the presence of THRAP3. Interacts with NCOA2. The CLOCK-BMAL1 heterodimer interacts with PASD1. Interacts with ASS1 and IMPDH2; in a circadian manner. Interacts with NDUFA9. Interacts with PIWIL2 (via PIWI domain). Interacts with HNF4A. In terms of processing, ubiquitinated, leading to its proteasomal degradation. Post-translationally, O-glycosylated; contains O-GlcNAc. O-glycosylation by OGT prevents protein degradation by inhibiting ubiquitination. It also stabilizes the CLOCK-BMAL1 heterodimer thereby increasing CLOCK-BMAL1-mediated transcriptional activation of PER1/2/3 and CRY1/2. Phosphorylation is dependent on the CLOCK-BMAL1 heterodimer formation. Phosphorylation enhances the transcriptional activity, alters the subcellular localization and decreases the stability of the heterodimer by promoting its degradation. Phosphorylation shows circadian variations in the liver. May be phosphorylated by CSNK1D and CKSN1E. In terms of processing, sumoylation enhances its transcriptional activity and interaction with ESR1, resulting in up-regulation of ESR1 activity. Estrogen stimulates sumoylation. Desumoylation by SENP1 negatively regulates its transcriptional activity. Sumoylation stimulates cell proliferation and increases the proportion of S phase cells in breast cancer cell lines. Post-translationally, undergoes lysosome-mediated degradation in a time-dependent manner in the liver. In terms of tissue distribution, hair follicles (at protein level). Expressed in all tissues examined including spleen, thymus, prostate, testis, ovary, small intestine, colon, leukocytes, heart, brain, placenta, lung, liver, skeletal muscle, kidney and pancreas. Highest levels in testis and skeletal muscle. Low levels in thymus, lung and liver. Expressed in all brain regions with highest levels in cerebellum. Highly expressed in the suprachiasmatic nucleus (SCN).

It is found in the nucleus. It localises to the cytoplasm. Its subcellular location is the cytosol. The catalysed reaction is L-lysyl-[protein] + acetyl-CoA = N(6)-acetyl-L-lysyl-[protein] + CoA + H(+). Its activity is regulated as follows. There is conflicting data about the effect of NAD cofactors on activity. PubMed:11441146 suggests that the redox state of the cell can modulate the transcriptional activity of the CLOCK-BMAL1 heterodimer; NADH and NADPH enhance the DNA-binding activity of the heterodimer. PubMed:23229515 reports that NADH and NADPH have no significant effect on DNA-binding activity of the CLOCK-BMAL1 heterodimer. In terms of biological role, transcriptional activator which forms a core component of the circadian clock. The circadian clock, an internal time-keeping system, regulates various physiological processes through the generation of approximately 24 hour circadian rhythms in gene expression, which are translated into rhythms in metabolism and behavior. It is derived from the Latin roots 'circa' (about) and 'diem' (day) and acts as an important regulator of a wide array of physiological functions including metabolism, sleep, body temperature, blood pressure, endocrine, immune, cardiovascular, and renal function. Consists of two major components: the central clock, residing in the suprachiasmatic nucleus (SCN) of the brain, and the peripheral clocks that are present in nearly every tissue and organ system. Both the central and peripheral clocks can be reset by environmental cues, also known as Zeitgebers (German for 'timegivers'). The predominant Zeitgeber for the central clock is light, which is sensed by retina and signals directly to the SCN. The central clock entrains the peripheral clocks through neuronal and hormonal signals, body temperature and feeding-related cues, aligning all clocks with the external light/dark cycle. Circadian rhythms allow an organism to achieve temporal homeostasis with its environment at the molecular level by regulating gene expression to create a peak of protein expression once every 24 hours to control when a particular physiological process is most active with respect to the solar day. Transcription and translation of core clock components (CLOCK, NPAS2, BMAL1, BMAL2, PER1, PER2, PER3, CRY1 and CRY2) plays a critical role in rhythm generation, whereas delays imposed by post-translational modifications (PTMs) are important for determining the period (tau) of the rhythms (tau refers to the period of a rhythm and is the length, in time, of one complete cycle). A diurnal rhythm is synchronized with the day/night cycle, while the ultradian and infradian rhythms have a period shorter and longer than 24 hours, respectively. Disruptions in the circadian rhythms contribute to the pathology of cardiovascular diseases, cancer, metabolic syndromes and aging. A transcription/translation feedback loop (TTFL) forms the core of the molecular circadian clock mechanism. Transcription factors, CLOCK or NPAS2 and BMAL1 or BMAL2, form the positive limb of the feedback loop, act in the form of a heterodimer and activate the transcription of core clock genes and clock-controlled genes (involved in key metabolic processes), harboring E-box elements (5'-CACGTG-3') within their promoters. The core clock genes: PER1/2/3 and CRY1/2 which are transcriptional repressors form the negative limb of the feedback loop and interact with the CLOCK|NPAS2-BMAL1|BMAL2 heterodimer inhibiting its activity and thereby negatively regulating their own expression. This heterodimer also activates nuclear receptors NR1D1/2 and RORA/B/G, which form a second feedback loop and which activate and repress BMAL1 transcription, respectively. Regulates the circadian expression of ICAM1, VCAM1, CCL2, THPO and MPL and also acts as an enhancer of the transactivation potential of NF-kappaB. Plays an important role in the homeostatic regulation of sleep. The CLOCK-BMAL1 heterodimer regulates the circadian expression of SERPINE1/PAI1, VWF, B3, CCRN4L/NOC, NAMPT, DBP, MYOD1, PPARGC1A, PPARGC1B, SIRT1, GYS2, F7, NGFR, GNRHR, BHLHE40/DEC1, ATF4, MTA1, KLF10 and also genes implicated in glucose and lipid metabolism. Promotes rhythmic chromatin opening, regulating the DNA accessibility of other transcription factors. The CLOCK-BMAL2 heterodimer activates the transcription of SERPINE1/PAI1 and BHLHE40/DEC1. The preferred binding motif for the CLOCK-BMAL1 heterodimer is 5'-CACGTGA-3', which contains a flanking adenine nucleotide at the 3-prime end of the canonical 6-nucleotide E-box sequence. CLOCK specifically binds to the half-site 5'-CAC-3', while BMAL1 binds to the half-site 5'-GTGA-3'. The CLOCK-BMAL1 heterodimer also recognizes the non-canonical E-box motifs 5'-AACGTGA-3' and 5'-CATGTGA-3'. CLOCK has an intrinsic acetyltransferase activity, which enables circadian chromatin remodeling by acetylating histones and nonhistone proteins, including its own partner BMAL1. Represses glucocorticoid receptor NR3C1/GR-induced transcriptional activity by reducing the association of NR3C1/GR to glucocorticoid response elements (GREs) via the acetylation of multiple lysine residues located in its hinge region. The acetyltransferase activity of CLOCK is as important as its transcription activity in circadian control. Acetylates metabolic enzymes IMPDH2 and NDUFA9 in a circadian manner. Facilitated by BMAL1, rhythmically interacts and acetylates argininosuccinate synthase 1 (ASS1) leading to enzymatic inhibition of ASS1 as well as the circadian oscillation of arginine biosynthesis and subsequent ureagenesis. Drives the circadian rhythm of blood pressure through transcriptional activation of ATP1B1. The polypeptide is Circadian locomoter output cycles protein kaput (CLOCK) (Homo sapiens (Human)).